The primary structure comprises 190 residues: Protein GrpE (190 aa).

The segment covering Met1–Ser18 has biased composition (polar residues). Residues Met1–Asn21 are disordered.

The protein belongs to the GrpE family. In terms of assembly, homodimer.

The protein localises to the cytoplasm. Functionally, participates actively in the response to hyperosmotic and heat shock by preventing the aggregation of stress-denatured proteins, in association with DnaK and GrpE. It is the nucleotide exchange factor for DnaK and may function as a thermosensor. Unfolded proteins bind initially to DnaJ; upon interaction with the DnaJ-bound protein, DnaK hydrolyzes its bound ATP, resulting in the formation of a stable complex. GrpE releases ADP from DnaK; ATP binding to DnaK triggers the release of the substrate protein, thus completing the reaction cycle. Several rounds of ATP-dependent interactions between DnaJ, DnaK and GrpE are required for fully efficient folding. The sequence is that of Protein GrpE from Chlamydia trachomatis serovar L2b (strain UCH-1/proctitis).